Here is a 327-residue protein sequence, read N- to C-terminus: Methionyl-tRNA formyltransferase (327 aa).

122–125 (SLLP) contacts (6S)-5,6,7,8-tetrahydrofolate.

The protein belongs to the Fmt family.

It carries out the reaction L-methionyl-tRNA(fMet) + (6R)-10-formyltetrahydrofolate = N-formyl-L-methionyl-tRNA(fMet) + (6S)-5,6,7,8-tetrahydrofolate + H(+). In terms of biological role, attaches a formyl group to the free amino group of methionyl-tRNA(fMet). The formyl group appears to play a dual role in the initiator identity of N-formylmethionyl-tRNA by promoting its recognition by IF2 and preventing the misappropriation of this tRNA by the elongation apparatus. This Ralstonia pickettii (strain 12J) protein is Methionyl-tRNA formyltransferase.